A 232-amino-acid chain; its full sequence is 5'-methylthioadenosine/S-adenosylhomocysteine nucleosidase (232 aa).

Residue E12 is the Proton acceptor of the active site. Residues G78, M153, and 174 to 175 each bind substrate; that span reads ME. D198 functions as the Proton donor in the catalytic mechanism.

The protein belongs to the PNP/UDP phosphorylase family. MtnN subfamily.

The catalysed reaction is S-adenosyl-L-homocysteine + H2O = S-(5-deoxy-D-ribos-5-yl)-L-homocysteine + adenine. The enzyme catalyses S-methyl-5'-thioadenosine + H2O = 5-(methylsulfanyl)-D-ribose + adenine. It catalyses the reaction 5'-deoxyadenosine + H2O = 5-deoxy-D-ribose + adenine. It functions in the pathway amino-acid biosynthesis; L-methionine biosynthesis via salvage pathway; S-methyl-5-thio-alpha-D-ribose 1-phosphate from S-methyl-5'-thioadenosine (hydrolase route): step 1/2. Catalyzes the irreversible cleavage of the glycosidic bond in both 5'-methylthioadenosine (MTA) and S-adenosylhomocysteine (SAH/AdoHcy) to adenine and the corresponding thioribose, 5'-methylthioribose and S-ribosylhomocysteine, respectively. Also cleaves 5'-deoxyadenosine, a toxic by-product of radical S-adenosylmethionine (SAM) enzymes, into 5-deoxyribose and adenine. The polypeptide is 5'-methylthioadenosine/S-adenosylhomocysteine nucleosidase (Geobacillus sp. (strain WCH70)).